The chain runs to 283 residues: 1D-myo-inositol 2-acetamido-2-deoxy-alpha-D-glucopyranoside deacetylase (283 aa).

3 residues coordinate Zn(2+): H7, D10, and H148.

The protein belongs to the MshB deacetylase family. The cofactor is Zn(2+).

The catalysed reaction is 1D-myo-inositol 2-acetamido-2-deoxy-alpha-D-glucopyranoside + H2O = 1D-myo-inositol 2-amino-2-deoxy-alpha-D-glucopyranoside + acetate. In terms of biological role, catalyzes the deacetylation of 1D-myo-inositol 2-acetamido-2-deoxy-alpha-D-glucopyranoside (GlcNAc-Ins) in the mycothiol biosynthesis pathway. The chain is 1D-myo-inositol 2-acetamido-2-deoxy-alpha-D-glucopyranoside deacetylase from Gordonia bronchialis (strain ATCC 25592 / DSM 43247 / BCRC 13721 / JCM 3198 / KCTC 3076 / NBRC 16047 / NCTC 10667) (Rhodococcus bronchialis).